An 88-amino-acid polypeptide reads, in one-letter code: Enticin (88 aa).

Residues 1 to 19 form the signal peptide; it reads MKTALPLLLLTCLVAAVQS. 3 cysteine pairs are disulfide-bonded: cysteine 25-cysteine 33, cysteine 40-cysteine 52, and cysteine 59-cysteine 67. Residues 69–88 constitute a propeptide that is removed on maturation; it reads REQSQLNHDHLNNHTTTQQP.

As to quaternary structure, binds to attractin and temptin.

The protein resides in the secreted. Its function is as follows. A component of the complex of water-borne protein pheromones that stimulates attraction and mating behavior. In Aplysia californica (California sea hare), this protein is Enticin.